Consider the following 118-residue polypeptide: Large ribosomal subunit protein uL24 (118 aa).

It belongs to the universal ribosomal protein uL24 family. Part of the 50S ribosomal subunit.

Its function is as follows. One of two assembly initiator proteins, it binds directly to the 5'-end of the 23S rRNA, where it nucleates assembly of the 50S subunit. In terms of biological role, one of the proteins that surrounds the polypeptide exit tunnel on the outside of the subunit. The polypeptide is Large ribosomal subunit protein uL24 (Parasynechococcus marenigrum (strain WH8102)).